Reading from the N-terminus, the 366-residue chain is DNA polymerase processivity factor (366 aa).

Positions 1–16 are enriched in basic residues; the sequence is MERGSRDHHRDHRDHR. 2 disordered regions span residues 1 to 25 and 286 to 366; these read MERG…REPP and ESRF…RCVV. Positions 286–308 are enriched in basic and acidic residues; the sequence is ESRFERMGKQDDGKGDRNHKNED. Polar residues-rich tracts occupy residues 313–322 and 330–339; these read ASKQETQYKI and KNGTAGSSLF.

This sequence belongs to the herpesviridae polymerase accessory protein family.

Functionally, accessory subunit of the DNA polymerase that acts to increase the processivity of polymerization. This Homo sapiens (Human) protein is DNA polymerase processivity factor (U27).